Consider the following 520-residue polypeptide: MEEESSSWFIPKVLVLSVILSLVIVKGMSLLWWRPRKIEEHFSKQGIRGPPYHFFIGNVKELVGMMLKASSHPMPFSHNILPRVLSFYHHWRKIYGATFLVWFGPTFRLTVADPDLIREIFSKSEFYEKNEAHPLVKQLEGDGLLSLKGEKWAHHRKIISPTFHMENLKLLVPVVLKSVTDMVDKWSDKLSENGEVEVDVYEWFQILTEDVISRTAFGSSYEDGRAVFRLQAQQMLLCAEAFQKVFIPGYRFFPTRGNLKSWKLDKEIRKSLLKLIERRRQNAIDGEGEECKEPAAKDLLGLMIQAKNVTVQDIVEECKSFFFAGKQTTSNLLTWTTILLSMHPEWQAKARDEVLRVCGSRDVPTKDHVVKLKTLSMILNESLRLYPPIVATIRRAKSDVKLGGYKIPCGTELLIPIIAVHHDQAIWGNDVNEFNPARFADGVPRAAKHPVGFIPFGLGVRTCIGQNLAILQAKLTLAVMIQRFTFHLAPTYQHAPTVLMLLYPQHGAPITFRRLTNHED.

A helical transmembrane segment spans residues 13 to 33 (VLVLSVILSLVIVKGMSLLWW). Cys463 serves as a coordination point for heme.

This sequence belongs to the cytochrome P450 family. Heme is required as a cofactor.

It is found in the membrane. In terms of biological role, cytochrome P450 involved in brassinosteroids (BRs) inactivation and regulation of BRs homeostasis. Inactivates the BRs castasterone (CS) and brassinolide (BL) through carbon 26 hydroxylation. Acts in association with CYP72C1 to inactivate BRs and modulate photomorphogenesis. The protein is Cytochrome P450 734A1 (CYP734A1) of Arabidopsis thaliana (Mouse-ear cress).